We begin with the raw amino-acid sequence, 802 residues long: Oligophrenin-1 (802 aa).

The 104-residue stretch at 265-368 (QPTIEGYLYT…WMEAMDGKEP (104 aa)) folds into the PH domain. Residues 380 to 564 (MELNEVGFKF…ILIEHFGKIY (185 aa)) form the Rho-GAP domain. Disordered regions lie at residues 569–588 (EESA…RHKP), 607–666 (LDES…EPCP), 680–770 (GGTK…NAGE), and 783–802 (FETA…GDES). The segment covering 616–627 (HQTPNGTITSSI) has biased composition (polar residues). Over residues 716–732 (HHKEGDADSFSKVRPPG) the composition is skewed to basic and acidic residues.

Interacts with HOMER1. Interacts with AMPA receptor complexes. Interacts with SH3GL2 (endophilin-A1). Interacts (via C-terminus) with NR1D1. In terms of tissue distribution, expressed in brain.

The protein resides in the postsynapse. It is found in the presynapse. Its subcellular location is the cell projection. It localises to the axon. The protein localises to the dendritic spine. The protein resides in the dendrite. It is found in the cytoplasm. In terms of biological role, stimulates GTP hydrolysis of members of the Rho family. Its action on RHOA activity and signaling is implicated in growth and stabilization of dendritic spines, and therefore in synaptic function. Critical for the stabilization of AMPA receptors at postsynaptic sites. Critical for the regulation of synaptic vesicle endocytosis at presynaptic terminals. Required for the localization of NR1D1 to dendrites, can suppress its repressor activity and protect it from proteasomal degradation. The sequence is that of Oligophrenin-1 (OPHN1) from Homo sapiens (Human).